A 263-amino-acid polypeptide reads, in one-letter code: Trans-aconitate 2-methyltransferase (263 aa).

It belongs to the methyltransferase superfamily. Tam family.

The protein localises to the cytoplasm. It catalyses the reaction trans-aconitate + S-adenosyl-L-methionine = (E)-3-(methoxycarbonyl)pent-2-enedioate + S-adenosyl-L-homocysteine. Its function is as follows. Catalyzes the S-adenosylmethionine monomethyl esterification of trans-aconitate. This is Trans-aconitate 2-methyltransferase from Mycobacterium marinum (strain ATCC BAA-535 / M).